Here is a 1394-residue protein sequence, read N- to C-terminus: DNA-directed RNA polymerase subunit beta'' (1394 aa).

4 residues coordinate Zn(2+): Cys-224, Cys-295, Cys-302, and Cys-305.

This sequence belongs to the RNA polymerase beta' chain family. RpoC2 subfamily. In plastids the minimal PEP RNA polymerase catalytic core is composed of four subunits: alpha, beta, beta', and beta''. When a (nuclear-encoded) sigma factor is associated with the core the holoenzyme is formed, which can initiate transcription. Zn(2+) is required as a cofactor.

It is found in the plastid. The protein resides in the chloroplast. The catalysed reaction is RNA(n) + a ribonucleoside 5'-triphosphate = RNA(n+1) + diphosphate. In terms of biological role, DNA-dependent RNA polymerase catalyzes the transcription of DNA into RNA using the four ribonucleoside triphosphates as substrates. In Vitis vinifera (Grape), this protein is DNA-directed RNA polymerase subunit beta''.